A 175-amino-acid chain; its full sequence is Nucleoside-triphosphatase THEP1 (175 aa).

ATP is bound by residues 16–23 and 103–110; these read GMPGVGKT and VAFIDEIG.

This sequence belongs to the THEP1 NTPase family.

The enzyme catalyses a ribonucleoside 5'-triphosphate + H2O = a ribonucleoside 5'-diphosphate + phosphate + H(+). Its function is as follows. Has nucleotide phosphatase activity towards ATP, GTP, CTP, TTP and UTP. May hydrolyze nucleoside diphosphates with lower efficiency. This is Nucleoside-triphosphatase THEP1 from Pyrobaculum calidifontis (strain DSM 21063 / JCM 11548 / VA1).